We begin with the raw amino-acid sequence, 157 residues long: Ribosomal RNA large subunit methyltransferase H (157 aa).

Residues leucine 73, glycine 105, and 124 to 129 (LSRMTF) contribute to the S-adenosyl-L-methionine site.

Belongs to the RNA methyltransferase RlmH family. In terms of assembly, homodimer.

It localises to the cytoplasm. It carries out the reaction pseudouridine(1915) in 23S rRNA + S-adenosyl-L-methionine = N(3)-methylpseudouridine(1915) in 23S rRNA + S-adenosyl-L-homocysteine + H(+). In terms of biological role, specifically methylates the pseudouridine at position 1915 (m3Psi1915) in 23S rRNA. The polypeptide is Ribosomal RNA large subunit methyltransferase H (Porphyromonas gingivalis (strain ATCC BAA-308 / W83)).